The primary structure comprises 265 residues: NAD kinase 1 (265 aa).

The active-site Proton acceptor is the aspartate 45. NAD(+) is bound by residues 45–46, 122–123, arginine 148, aspartate 150, and alanine 185; these read DG and NE.

The protein belongs to the NAD kinase family. Requires a divalent metal cation as cofactor.

It localises to the cytoplasm. It catalyses the reaction NAD(+) + ATP = ADP + NADP(+) + H(+). Functionally, involved in the regulation of the intracellular balance of NAD and NADP, and is a key enzyme in the biosynthesis of NADP. Catalyzes specifically the phosphorylation on 2'-hydroxyl of the adenosine moiety of NAD to yield NADP. This is NAD kinase 1 from Bacillus anthracis.